The following is a 511-amino-acid chain: 2,3-bisphosphoglycerate-independent phosphoglycerate mutase (511 aa).

Asp-12 provides a ligand contact to Mn(2+). The residue at position 36 (Tyr-36) is a Phosphotyrosine. Ser-62 contributes to the Mn(2+) binding site. The active-site Phosphoserine intermediate is Ser-62. Substrate contacts are provided by residues His-123, 153 to 154 (RD), Arg-185, Arg-191, 261 to 264 (RPDR), and Lys-336. Residues Asp-403, His-407, Asp-444, His-445, and His-462 each contribute to the Mn(2+) site.

This sequence belongs to the BPG-independent phosphoglycerate mutase family. As to quaternary structure, monomer. Requires Mn(2+) as cofactor.

It carries out the reaction (2R)-2-phosphoglycerate = (2R)-3-phosphoglycerate. The protein operates within carbohydrate degradation; glycolysis; pyruvate from D-glyceraldehyde 3-phosphate: step 3/5. In terms of biological role, essential for rapid growth and for sporulation. Catalyzes the interconversion of 2-phosphoglycerate and 3-phosphoglycerate. This Bacillus licheniformis (strain ATCC 14580 / DSM 13 / JCM 2505 / CCUG 7422 / NBRC 12200 / NCIMB 9375 / NCTC 10341 / NRRL NRS-1264 / Gibson 46) protein is 2,3-bisphosphoglycerate-independent phosphoglycerate mutase.